The sequence spans 506 residues: Cytochrome P450 6a2 (506 aa).

Heme is bound at residue cysteine 451.

The protein belongs to the cytochrome P450 family. The cofactor is heme.

Its subcellular location is the endoplasmic reticulum membrane. The protein resides in the microsome membrane. Is involved in the breakdown of synthetic insecticides and may be involved in the metabolism of insect hormones. This is Cytochrome P450 6a2 (Cyp6a2) from Drosophila melanogaster (Fruit fly).